The sequence spans 490 residues: Metalloreductase STEAP2 (490 aa).

Residues 38–41, 60–61, 93–100, N118, and A151 each bind NADP(+); these read SGDF, SR, and IHREHYTS. FAD is bound by residues W152 and D160. A helical membrane pass occupies residues 208-228; that stretch reads LFTLWRGPVVVAISLATFFFL. Y229 contributes to the Fe(3+) binding site. Residues 259 to 279 form a helical membrane-spanning segment; sequence LPIVAITLLSLVYLAGLLAAA. The Ferric oxidoreductase domain maps to 259 to 407; sequence LPIVAITLLS…LGYVALLIST (149 aa). Q281 and R302 together coordinate FAD. 4 helical membrane passes run 305–325, 359–379, 393–413, and 432–452; these read LGLL…CLPM, MYIS…VTSI, FIQS…VLIY, and FVLA…LFLP. Residue H316 coordinates heme b. A Fe(3+)-binding site is contributed by Y319. S378 and Q395 together coordinate FAD. Residue H409 coordinates heme b. Phosphoserine is present on S483.

It belongs to the STEAP family. FAD serves as cofactor. Requires heme b as cofactor. As to expression, expressed at high levels in prostate and at significantly lower levels in heart, brain, kidney, pancreas, and ovary.

The protein resides in the endosome membrane. It is found in the cell membrane. The catalysed reaction is 2 Fe(2+) + NADP(+) + H(+) = 2 Fe(3+) + NADPH. It carries out the reaction 2 Cu(+) + NADP(+) + H(+) = 2 Cu(2+) + NADPH. Integral membrane protein that functions as a NADPH-dependent ferric-chelate reductase, using NADPH from one side of the membrane to reduce a Fe(3+) chelate that is bound on the other side of the membrane. Mediates sequential transmembrane electron transfer from NADPH to FAD and onto heme, and finally to the Fe(3+) chelate. Can also reduce Cu(2+) to Cu(1+). The sequence is that of Metalloreductase STEAP2 (STEAP2) from Homo sapiens (Human).